The following is a 341-amino-acid chain: Nicotinate-nucleotide--dimethylbenzimidazole phosphoribosyltransferase (341 aa).

Glu310 serves as the catalytic Proton acceptor.

It belongs to the CobT family.

It carries out the reaction 5,6-dimethylbenzimidazole + nicotinate beta-D-ribonucleotide = alpha-ribazole 5'-phosphate + nicotinate + H(+). It functions in the pathway nucleoside biosynthesis; alpha-ribazole biosynthesis; alpha-ribazole from 5,6-dimethylbenzimidazole: step 1/2. Catalyzes the synthesis of alpha-ribazole-5'-phosphate from nicotinate mononucleotide (NAMN) and 5,6-dimethylbenzimidazole (DMB). The sequence is that of Nicotinate-nucleotide--dimethylbenzimidazole phosphoribosyltransferase from Vibrio cholerae serotype O1 (strain ATCC 39315 / El Tor Inaba N16961).